Consider the following 125-residue polypeptide: MADLAKIEEQLSSLTLMQAAELVKILEEKWGVSAAAPVAVAAAGAAAPAAEAVAEKTEFEVVLTAAGDKKVEVIKVVKDITGLGLIEAKKLVDEAPKPIKSNVKKADADEIKGKLEAAGAKVELK.

The protein belongs to the bacterial ribosomal protein bL12 family. Homodimer. Part of the ribosomal stalk of the 50S ribosomal subunit. Forms a multimeric L10(L12)X complex, where L10 forms an elongated spine to which 2 to 4 L12 dimers bind in a sequential fashion. Binds GTP-bound translation factors.

Forms part of the ribosomal stalk which helps the ribosome interact with GTP-bound translation factors. Is thus essential for accurate translation. This is Large ribosomal subunit protein bL12 from Rickettsia africae (strain ESF-5).